The following is a 461-amino-acid chain: Bifunctional protein GlmU (461 aa).

The interval 1–235 is pyrophosphorylase; it reads MKAIILAAGL…ITEIFGVNDR (235 aa). Residues 6–9, Lys20, Gln71, and 77–78 contribute to the UDP-N-acetyl-alpha-D-glucosamine site; these read LAAG and GT. Asp102 contributes to the Mg(2+) binding site. Positions 145, 160, 175, and 233 each coordinate UDP-N-acetyl-alpha-D-glucosamine. Asn233 lines the Mg(2+) pocket. A linker region spans residues 236–256; sequence WELSFAESVIKMRILENLARS. The tract at residues 257 to 461 is N-acetyltransferase; that stretch reads GVTIHSPESV…LEDKSKVKDE (205 aa). UDP-N-acetyl-alpha-D-glucosamine-binding residues include Arg339 and Lys357. His369 acts as the Proton acceptor in catalysis. 2 residues coordinate UDP-N-acetyl-alpha-D-glucosamine: Tyr372 and Asn383. Ala386, Ser411, Gly429, and Arg446 together coordinate acetyl-CoA.

In the N-terminal section; belongs to the N-acetylglucosamine-1-phosphate uridyltransferase family. The protein in the C-terminal section; belongs to the transferase hexapeptide repeat family. As to quaternary structure, homotrimer. The cofactor is Mg(2+).

The protein resides in the cytoplasm. The enzyme catalyses alpha-D-glucosamine 1-phosphate + acetyl-CoA = N-acetyl-alpha-D-glucosamine 1-phosphate + CoA + H(+). It catalyses the reaction N-acetyl-alpha-D-glucosamine 1-phosphate + UTP + H(+) = UDP-N-acetyl-alpha-D-glucosamine + diphosphate. It participates in nucleotide-sugar biosynthesis; UDP-N-acetyl-alpha-D-glucosamine biosynthesis; N-acetyl-alpha-D-glucosamine 1-phosphate from alpha-D-glucosamine 6-phosphate (route II): step 2/2. Its pathway is nucleotide-sugar biosynthesis; UDP-N-acetyl-alpha-D-glucosamine biosynthesis; UDP-N-acetyl-alpha-D-glucosamine from N-acetyl-alpha-D-glucosamine 1-phosphate: step 1/1. The protein operates within bacterial outer membrane biogenesis; LPS lipid A biosynthesis. Functionally, catalyzes the last two sequential reactions in the de novo biosynthetic pathway for UDP-N-acetylglucosamine (UDP-GlcNAc). The C-terminal domain catalyzes the transfer of acetyl group from acetyl coenzyme A to glucosamine-1-phosphate (GlcN-1-P) to produce N-acetylglucosamine-1-phosphate (GlcNAc-1-P), which is converted into UDP-GlcNAc by the transfer of uridine 5-monophosphate (from uridine 5-triphosphate), a reaction catalyzed by the N-terminal domain. The chain is Bifunctional protein GlmU from Hydrogenobaculum sp. (strain Y04AAS1).